A 229-amino-acid chain; its full sequence is MNCAIIMAAGRGSRMKVNKNKQFILIQGKPILAYTIDKFQRSPLIDEIIIVAAESEINFCMQEIVYKYKFNKVKNIVSGGSERQQSVMNGLKAVKSANIVLIHDGARPFVDNKIIENGIKYAEKYGGAACGVQPKDTIKIKSEDGFSEKTIDRSKLFCVQTPQCFKYDSILKAHINAEKEGILATDDTMIFEMSGNKVYLYDGSYENLKITTPDDLYAAETLLKKNSIQ.

This sequence belongs to the IspD/TarI cytidylyltransferase family. IspD subfamily.

The enzyme catalyses 2-C-methyl-D-erythritol 4-phosphate + CTP + H(+) = 4-CDP-2-C-methyl-D-erythritol + diphosphate. Its pathway is isoprenoid biosynthesis; isopentenyl diphosphate biosynthesis via DXP pathway; isopentenyl diphosphate from 1-deoxy-D-xylulose 5-phosphate: step 2/6. Functionally, catalyzes the formation of 4-diphosphocytidyl-2-C-methyl-D-erythritol from CTP and 2-C-methyl-D-erythritol 4-phosphate (MEP). The polypeptide is 2-C-methyl-D-erythritol 4-phosphate cytidylyltransferase (Clostridium acetobutylicum (strain ATCC 824 / DSM 792 / JCM 1419 / IAM 19013 / LMG 5710 / NBRC 13948 / NRRL B-527 / VKM B-1787 / 2291 / W)).